The following is a 459-amino-acid chain: Cysteine--tRNA ligase (459 aa).

Residue cysteine 31 participates in Zn(2+) binding. Positions proline 33–asparagine 43 match the 'HIGH' region motif. Zn(2+)-binding residues include cysteine 216, histidine 241, and glutamate 245. The short motif at lysine 274–serine 278 is the 'KMSKS' region element. Lysine 277 contacts ATP.

The protein belongs to the class-I aminoacyl-tRNA synthetase family. As to quaternary structure, monomer. Zn(2+) is required as a cofactor.

The protein resides in the cytoplasm. It carries out the reaction tRNA(Cys) + L-cysteine + ATP = L-cysteinyl-tRNA(Cys) + AMP + diphosphate. This is Cysteine--tRNA ligase from Rickettsia felis (strain ATCC VR-1525 / URRWXCal2) (Rickettsia azadi).